Here is a 682-residue protein sequence, read N- to C-terminus: Methionine--tRNA ligase (682 aa).

The short motif at 15–25 (PYANGAIHLGH) is the 'HIGH' region element. Zn(2+) is bound by residues C146, C149, C159, and C162. Positions 331–335 (KMSKS) match the 'KMSKS' region motif. K334 is an ATP binding site. One can recognise a tRNA-binding domain in the interval 580 to 682 (DFAKLDLRVA…QGVKPGMQVK (103 aa)).

Belongs to the class-I aminoacyl-tRNA synthetase family. MetG type 1 subfamily. Homodimer. It depends on Zn(2+) as a cofactor.

The protein resides in the cytoplasm. It carries out the reaction tRNA(Met) + L-methionine + ATP = L-methionyl-tRNA(Met) + AMP + diphosphate. Is required not only for elongation of protein synthesis but also for the initiation of all mRNA translation through initiator tRNA(fMet) aminoacylation. The polypeptide is Methionine--tRNA ligase (Pasteurella multocida (strain Pm70)).